We begin with the raw amino-acid sequence, 397 residues long: L-cysteine desulfidase (397 aa).

Residue Cys-23 is the Proton acceptor of the active site. Residues Cys-288, Cys-330, and Cys-337 each coordinate [4Fe-4S] cluster.

It belongs to the L-cysteine desulfidase family. Homotrimer. [4Fe-4S] cluster serves as cofactor.

The catalysed reaction is L-cysteine + H2O = hydrogen sulfide + pyruvate + NH4(+) + H(+). Functionally, catalyzes the cleavage of L-cysteine to form 2-aminoprop-2-enoate and sulfide. The former then spontaneously hydrolyzes to pyruvate and NH(3). May be responsible for the production of sulfide required for the biosynthesis of iron-sulfur centers in this archaea. This is L-cysteine desulfidase from Methanococcus maripaludis (strain C5 / ATCC BAA-1333).